A 688-amino-acid polypeptide reads, in one-letter code: DNA ligase (688 aa).

NAD(+)-binding positions include 42–46 (DAEYD), 91–92 (SL), and Glu-128. Catalysis depends on Lys-130, which acts as the N6-AMP-lysine intermediate. NAD(+) contacts are provided by Arg-151, Glu-188, Lys-305, and Lys-329. Zn(2+) contacts are provided by Cys-423, Cys-426, Cys-441, and Cys-447. The BRCT domain occupies 608 to 688 (APQGVLAGKT…GMRKLLEGQL (81 aa)).

This sequence belongs to the NAD-dependent DNA ligase family. LigA subfamily. Mg(2+) is required as a cofactor. Requires Mn(2+) as cofactor.

The catalysed reaction is NAD(+) + (deoxyribonucleotide)n-3'-hydroxyl + 5'-phospho-(deoxyribonucleotide)m = (deoxyribonucleotide)n+m + AMP + beta-nicotinamide D-nucleotide.. Functionally, DNA ligase that catalyzes the formation of phosphodiester linkages between 5'-phosphoryl and 3'-hydroxyl groups in double-stranded DNA using NAD as a coenzyme and as the energy source for the reaction. It is essential for DNA replication and repair of damaged DNA. The chain is DNA ligase from Paraburkholderia phytofirmans (strain DSM 17436 / LMG 22146 / PsJN) (Burkholderia phytofirmans).